A 261-amino-acid polypeptide reads, in one-letter code: Indole-3-glycerol phosphate synthase (261 aa).

The protein belongs to the TrpC family.

It carries out the reaction 1-(2-carboxyphenylamino)-1-deoxy-D-ribulose 5-phosphate + H(+) = (1S,2R)-1-C-(indol-3-yl)glycerol 3-phosphate + CO2 + H2O. Its pathway is amino-acid biosynthesis; L-tryptophan biosynthesis; L-tryptophan from chorismate: step 4/5. This is Indole-3-glycerol phosphate synthase from Burkholderia thailandensis (strain ATCC 700388 / DSM 13276 / CCUG 48851 / CIP 106301 / E264).